The chain runs to 154 residues: MFTQANLFLVLLLVIALIAKNNSLILAVSVLIGIKLIGLDQKIFPVLQSKGINWGVTVITIAVLVPIATGDIGFKQLGEAVKSSYAWIALGAGILVALIAKNGIVLLENDPHITTALVFGTILAVSLFKGVAVGPLIGAGIAYLAMQAVKFFSG.

4 consecutive transmembrane segments (helical) span residues 8 to 28 (FLVLLLVIALIAKNNSLILAV), 54 to 74 (WGVTVITIAVLVPIATGDIGF), 87 to 107 (WIALGAGILVALIAKNGIVLL), and 117 to 137 (LVFGTILAVSLFKGVAVGPLI).

It belongs to the UPF0756 family.

The protein localises to the cell membrane. This Bacillus pumilus (strain SAFR-032) protein is UPF0756 membrane protein BPUM_2558.